Here is a 149-residue protein sequence, read N- to C-terminus: Arginine regulator (149 aa).

It belongs to the ArgR family.

The protein localises to the cytoplasm. The protein operates within amino-acid degradation; L-arginine degradation via ADI pathway. Functionally, regulates the transcription of the arc operon, involved in arginine catabolism. The polypeptide is Arginine regulator (argR1) (Bacillus thuringiensis subsp. konkukian (strain 97-27)).